The following is a 251-amino-acid chain: SNAP25 homologous protein SNAP29 (251 aa).

The interval Met1 to Gln52 is disordered. Polar residues predominate over residues Thr40–Gln52. Positions Lys186–Leu248 constitute a t-SNARE coiled-coil homology domain.

It belongs to the SNAP-25 family.

The protein resides in the membrane. It is found in the cytoplasm. In terms of biological role, SNAREs, soluble N-ethylmaleimide-sensitive factor-attachment protein receptors, are essential proteins for fusion of cellular membranes. SNAREs localized on opposing membranes assemble to form a trans-SNARE complex, an extended, parallel four alpha-helical bundle that drives membrane fusion. The sequence is that of SNAP25 homologous protein SNAP29 (SNAP29) from Arabidopsis thaliana (Mouse-ear cress).